We begin with the raw amino-acid sequence, 932 residues long: Protein translocase subunit SecA (932 aa).

ATP contacts are provided by residues Gln-83, 101–105 (GEGKT), and Asp-491.

Belongs to the SecA family. Monomer and homodimer. Part of the essential Sec protein translocation apparatus which comprises SecA, SecYEG and auxiliary proteins SecDF. Other proteins may also be involved.

The protein localises to the cell inner membrane. Its subcellular location is the cellular thylakoid membrane. It localises to the cytoplasm. It carries out the reaction ATP + H2O + cellular proteinSide 1 = ADP + phosphate + cellular proteinSide 2.. In terms of biological role, part of the Sec protein translocase complex. Interacts with the SecYEG preprotein conducting channel. Has a central role in coupling the hydrolysis of ATP to the transfer of proteins into and across the cell membrane, serving as an ATP-driven molecular motor driving the stepwise translocation of polypeptide chains across the membrane. Probably participates in protein translocation into and across both the cytoplasmic and thylakoid membranes in cyanobacterial cells. This is Protein translocase subunit SecA from Cyanothece sp. (strain PCC 7425 / ATCC 29141).